We begin with the raw amino-acid sequence, 419 residues long: UDP-N-acetylglucosamine 1-carboxyvinyltransferase (419 aa).

22-23 provides a ligand contact to phosphoenolpyruvate; sequence KN. R91 contributes to the UDP-N-acetyl-alpha-D-glucosamine binding site. C115 serves as the catalytic Proton donor. At C115 the chain carries 2-(S-cysteinyl)pyruvic acid O-phosphothioketal. Residues 120–124, 160–163, D305, and V327 each bind UDP-N-acetyl-alpha-D-glucosamine; these read RPVDL and KVSV.

The protein belongs to the EPSP synthase family. MurA subfamily.

The protein resides in the cytoplasm. It catalyses the reaction phosphoenolpyruvate + UDP-N-acetyl-alpha-D-glucosamine = UDP-N-acetyl-3-O-(1-carboxyvinyl)-alpha-D-glucosamine + phosphate. Its pathway is cell wall biogenesis; peptidoglycan biosynthesis. Functionally, cell wall formation. Adds enolpyruvyl to UDP-N-acetylglucosamine. This chain is UDP-N-acetylglucosamine 1-carboxyvinyltransferase, found in Shigella sonnei (strain Ss046).